The sequence spans 299 residues: Exosome complex component rrp42 (299 aa).

Belongs to the RNase PH family. Component of the RNA exosome complex. Specifically part of the catalytically inactive RNA exosome core complex (Exo-9) which may associate with the catalytic subunits rrp6 and dis3 in cytoplasmic- and nuclear-specific RNA exosome complex forms. Exo-9 is formed by a hexameric base ring of RNase PH domain-containing subunits and a cap ring consisting of csl4, rrp4 and rrp40.

The protein localises to the cytoplasm. It is found in the nucleus. The protein resides in the nucleolus. Non-catalytic component of the RNA exosome complex which has 3'-&gt;5' exoribonuclease activity and participates in a multitude of cellular RNA processing and degradation events. In the nucleus, the RNA exosome complex is involved in proper maturation of stable RNA species such as rRNA, snRNA and snoRNA, in the elimination of RNA processing by-products and non-coding 'pervasive' transcripts, such as antisense RNA species and cryptic unstable transcripts (CUTs), and of mRNAs with processing defects, thereby limiting or excluding their export to the cytoplasm. In the cytoplasm, the RNA exosome complex is involved in general mRNA turnover and in RNA surveillance pathways, preventing translation of aberrant mRNAs. The catalytic inactive RNA exosome core complex of 9 subunits (Exo-9) is proposed to play a pivotal role in the binding and presentation of RNA for ribonucleolysis, and to serve as a scaffold for the association with catalytic subunits and accessory proteins or complexes. ski6 is part of the hexameric ring of RNase PH domain-containing subunits proposed to form a central channel which threads RNA substrates for degradation. The polypeptide is Exosome complex component rrp42 (rrp42) (Schizosaccharomyces pombe (strain 972 / ATCC 24843) (Fission yeast)).